The following is a 159-amino-acid chain: Phosphopantetheine adenylyltransferase (159 aa).

Serine 9 contributes to the substrate binding site. Residues 9 to 10 and histidine 17 each bind ATP; that span reads SF. Lysine 41, isoleucine 75, and lysine 89 together coordinate substrate. ATP-binding positions include 90–92, glutamate 100, and 124–130; these read GLR and LEHISSS.

Belongs to the bacterial CoaD family. In terms of assembly, homohexamer. The cofactor is Mg(2+).

The protein resides in the cytoplasm. The catalysed reaction is (R)-4'-phosphopantetheine + ATP + H(+) = 3'-dephospho-CoA + diphosphate. The protein operates within cofactor biosynthesis; coenzyme A biosynthesis; CoA from (R)-pantothenate: step 4/5. Functionally, reversibly transfers an adenylyl group from ATP to 4'-phosphopantetheine, yielding dephospho-CoA (dPCoA) and pyrophosphate. This Bifidobacterium animalis subsp. lactis (strain AD011) protein is Phosphopantetheine adenylyltransferase.